A 229-amino-acid chain; its full sequence is Potassium/proton antiporter CemA (229 aa).

3 helical membrane-spanning segments follow: residues 7–27 (FLPL…SLSF), 106–126 (MILH…YSIL), and 189–209 (IISG…KYWI).

The protein belongs to the CemA family.

It localises to the plastid. It is found in the chloroplast inner membrane. The enzyme catalyses K(+)(in) + H(+)(out) = K(+)(out) + H(+)(in). Contributes to K(+)/H(+) antiport activity by supporting proton efflux to control proton extrusion and homeostasis in chloroplasts in a light-dependent manner to modulate photosynthesis. Prevents excessive induction of non-photochemical quenching (NPQ) under continuous-light conditions. Indirectly promotes efficient inorganic carbon uptake into chloroplasts. In Eucalyptus globulus subsp. globulus (Tasmanian blue gum), this protein is Potassium/proton antiporter CemA.